The following is a 232-amino-acid chain: Phosphatidylserine decarboxylase proenzyme (232 aa).

S190 functions as the Schiff-base intermediate with substrate; via pyruvic acid in the catalytic mechanism. A Pyruvic acid (Ser); by autocatalysis modification is found at S190.

It belongs to the phosphatidylserine decarboxylase family. PSD-A subfamily. As to quaternary structure, heterodimer of a large membrane-associated beta subunit and a small pyruvoyl-containing alpha subunit. The cofactor is pyruvate. In terms of processing, is synthesized initially as an inactive proenzyme. Formation of the active enzyme involves a self-maturation process in which the active site pyruvoyl group is generated from an internal serine residue via an autocatalytic post-translational modification. Two non-identical subunits are generated from the proenzyme in this reaction, and the pyruvate is formed at the N-terminus of the alpha chain, which is derived from the carboxyl end of the proenzyme. The post-translation cleavage follows an unusual pathway, termed non-hydrolytic serinolysis, in which the side chain hydroxyl group of the serine supplies its oxygen atom to form the C-terminus of the beta chain, while the remainder of the serine residue undergoes an oxidative deamination to produce ammonia and the pyruvoyl prosthetic group on the alpha chain.

The protein localises to the cell membrane. It catalyses the reaction a 1,2-diacyl-sn-glycero-3-phospho-L-serine + H(+) = a 1,2-diacyl-sn-glycero-3-phosphoethanolamine + CO2. The protein operates within phospholipid metabolism; phosphatidylethanolamine biosynthesis; phosphatidylethanolamine from CDP-diacylglycerol: step 2/2. In terms of biological role, catalyzes the formation of phosphatidylethanolamine (PtdEtn) from phosphatidylserine (PtdSer). The polypeptide is Phosphatidylserine decarboxylase proenzyme (Agrobacterium fabrum (strain C58 / ATCC 33970) (Agrobacterium tumefaciens (strain C58))).